We begin with the raw amino-acid sequence, 569 residues long: Laccase-13 (569 aa).

The signal sequence occupies residues 1–21 (MEQLRPFFLLLAIFVASLVNA). Plastocyanin-like domains are found at residues 29–145 (VIQE…PPLS) and 157–308 (REIT…YKDA). Asparagine 75 carries an N-linked (GlcNAc...) asparagine glycan. The Cu cation site is built by histidine 79, histidine 81, histidine 124, and histidine 126. N-linked (GlcNAc...) asparagine glycosylation is found at asparagine 186, asparagine 296, asparagine 330, asparagine 381, asparagine 391, and asparagine 432. The 136-residue stretch at 418 to 553 (DFPPTPPVTF…AMVFLVENGE (136 aa)) folds into the Plastocyanin-like 3 domain. Residues histidine 470, histidine 473, histidine 475, histidine 532, cysteine 533, histidine 534, and histidine 538 each contribute to the Cu cation site.

Belongs to the multicopper oxidase family. Requires Cu cation as cofactor. As to expression, mostly expressed in roots. Also detected in leaves, stems and flowers but not in siliques.

It localises to the secreted. The protein localises to the extracellular space. The protein resides in the apoplast. The enzyme catalyses 4 hydroquinone + O2 = 4 benzosemiquinone + 2 H2O. Its function is as follows. Lignin degradation and detoxification of lignin-derived products. The chain is Laccase-13 (LAC13) from Arabidopsis thaliana (Mouse-ear cress).